We begin with the raw amino-acid sequence, 555 residues long: Ribonuclease J2 (555 aa).

Histidine 74, histidine 76, histidine 142, and aspartate 164 together coordinate Zn(2+). Residue 364 to 368 (HVSGH) coordinates substrate.

It belongs to the metallo-beta-lactamase superfamily. RNA-metabolizing metallo-beta-lactamase-like family. Bacterial RNase J subfamily. In terms of assembly, unclear whether it forms homodimers or belongs to a larger complex. According to probably does not form homodimers, while shows homodimer formation. Both reports show RNase J1 and J2 interaction, probably as a heterotetramer shows it is a component of a possible RNA degradosome complex composed of rny, rnjA, rnjB, pnp, pfkA and eno, while finds no evidence of an RNA degradosome complex. It depends on Zn(2+) as a cofactor.

The protein resides in the cytoplasm. Functionally, endonucleolytically cleaves the 5'-leader sequence of certain mRNAs. Endonuclease digestion by the RNase J1/J2 complex occurs at a different site and in some cases more efficiently than J1 or J2 alone. The exonuclease activity of the J1/J2 complex is highly processive on substrates longer than 5 nucleotides, on shorter substrates is distributive. Plays a role in mRNA maturation and stability. Appears to have a limited effect on 16S rRNA maturation, despite its similarity to RNase J1. This subunit alone has very poor 5'-3' exonuclease activity. The polypeptide is Ribonuclease J2 (Bacillus subtilis (strain 168)).